A 484-amino-acid polypeptide reads, in one-letter code: Glycogen synthase (484 aa).

K15 lines the ADP-alpha-D-glucose pocket.

Belongs to the glycosyltransferase 1 family. Bacterial/plant glycogen synthase subfamily.

It catalyses the reaction [(1-&gt;4)-alpha-D-glucosyl](n) + ADP-alpha-D-glucose = [(1-&gt;4)-alpha-D-glucosyl](n+1) + ADP + H(+). Its pathway is glycan biosynthesis; glycogen biosynthesis. In terms of biological role, synthesizes alpha-1,4-glucan chains using ADP-glucose. In Anoxybacillus flavithermus (strain DSM 21510 / WK1), this protein is Glycogen synthase.